Consider the following 512-residue polypeptide: Tyrosine-protein kinase Lyn (512 aa).

A disordered region spans residues Met1–Val45. The N-myristoyl glycine moiety is linked to residue Gly2. A lipid anchor (S-palmitoyl cysteine) is attached at Cys3. Residue Ser19 is modified to Phosphoserine. The region spanning Glu63–Thr123 is the SH3 domain. One can recognise an SH2 domain in the interval Trp129–Cys226. A Phosphotyrosine modification is found at Tyr193. A Phosphoserine modification is found at Ser228. The region spanning Ile247–Tyr501 is the Protein kinase domain. ATP contacts are provided by residues Leu253–Val261 and Lys275. Residues Tyr306 and Tyr316 each carry the phosphotyrosine modification. The Proton acceptor role is filled by Asp367. Tyr397 is subject to Phosphotyrosine; by autocatalysis. Phosphotyrosine occurs at positions 460 and 473. Tyr508 is modified (phosphotyrosine; by autocatalysis, CSK and MATK).

This sequence belongs to the protein kinase superfamily. Tyr protein kinase family. SRC subfamily. In terms of assembly, interacts with TEC. Interacts (via SH2 domain) with FLT3 (tyrosine phosphorylated). Interacts with LIME1 and with CD79A upon activation of the B-cell antigen receptor. Interacts with the B-cell receptor complex. Interacts with phosphorylated THEMIS2. Interacts with EPOR. Interacts with MS4A2/FCER1B. Interaction (via the SH2 and SH3 domains) with MUC1 is stimulated by IL7 and the subsequent phosphorylation increases the binding between MUC1 and CTNNB1/beta-catenin. Interacts with ADAM15. Interacts with NDFIP2 and more weakly with NDFIP1. Interacts with FASLG. Interacts with KIT. Interacts with HCLS1. Interacts with FCGR2B. Interacts with FCGR1A; the interaction may be indirect. Interacts with CD19, CD22, CD79A and CD79B. Interacts (via SH3 domain) with CBLC, PPP1R15A and PDE4A. Interacts with TGFB1I1. Interacts (via SH3 domain) with PIK3R1, the regulatory subunit of phosphatidylinositol 3-kinase; this interaction enhances phosphatidylinositol 3-kinase activity. Interacts with CSF2RB, the common subunit of the IL3, IL5 and CSF2 receptors. Interacts with PAG1; identified in a complex with PAG1 and STAT3. Interacts with ABL1. Interacts with PTPN6/SHP-1. Interacts (via SH3 domain) with SCIMP (via proline-rich region). This interaction facilitates the phosphorylation of SCIMP on 'Tyr-96', which enhances binding of SCIMP to TLR4, and consequently the phosphorylation of TLR4 in response to stimulation by lipopolysaccharide in macrophages. Interacts with LPXN (via LD motif 3) and the interaction is induced upon B-cell antigen receptor (BCR) activation. Interacts (via SH3-domain) with ANKRD54 (via ankyrin repeat region) in an activation-independent status of LYN. Forms a multiprotein complex with ANKRD54 and HCLS1. Interacts (via SH2 and SH3 domains) with UNC119; leading to LYN activation. Interacts with CD36. Interacts with LYN. Interacts with SKAP1 and FYB1; this interaction promotes the phosphorylation of CLNK. Interacts with BCAR1/CAS and NEDD9/HEF1. Ubiquitinated by CBL, leading to its degradation. Post-translationally, autophosphorylated. Phosphorylated on tyrosine residues in response to KIT signaling. Phosphorylation at Tyr-397 is required for optimal activity. Phosphorylation at Tyr-508 inhibits kinase activity. Phosphorylated at Tyr-508 by CSK. Dephosphorylated by PTPRC/CD45. Becomes rapidly phosphorylated upon activation of the B-cell receptor and the immunoglobulin receptor FCGR1A. Phosphorylated in response to ITGB1 in B-cells. Detected in bone marrow-derived monocytes and macrophages (at protein level). Expressed predominantly in B-lymphoid and myeloid cells.

It is found in the cell membrane. Its subcellular location is the nucleus. It localises to the cytoplasm. The protein resides in the perinuclear region. The protein localises to the golgi apparatus. It is found in the membrane. The catalysed reaction is L-tyrosyl-[protein] + ATP = O-phospho-L-tyrosyl-[protein] + ADP + H(+). Its activity is regulated as follows. Subject to autoinhibition, mediated by intramolecular interactions between the SH2 domain and the C-terminal phosphotyrosine. Phosphorylation at Tyr-397 is required for optimal activity. Phosphorylated by CSK at Tyr-508; phosphorylation at Tyr-508 inhibits kinase activity. Kinase activity is modulated by dephosphorylation by PTPRC/CD45. Inhibited by dasatinib, PP2, and SU6656. Its function is as follows. Non-receptor tyrosine-protein kinase that transmits signals from cell surface receptors and plays an important role in the regulation of innate and adaptive immune responses, hematopoiesis, responses to growth factors and cytokines, integrin signaling, but also responses to DNA damage and genotoxic agents. Functions primarily as negative regulator, but can also function as activator, depending on the context. Required for the initiation of the B-cell response, but also for its down-regulation and termination. Plays an important role in the regulation of B-cell differentiation, proliferation, survival and apoptosis, and is important for immune self-tolerance. Acts downstream of several immune receptors, including the B-cell receptor, CD79A, CD79B, CD5, CD19, CD22, FCER1, FCGR2, FCGR1A, TLR2 and TLR4. Plays a role in the inflammatory response to bacterial lipopolysaccharide. Mediates the responses to cytokines and growth factors in hematopoietic progenitors, platelets, erythrocytes, and in mature myeloid cells, such as dendritic cells, neutrophils and eosinophils. Acts downstream of EPOR, KIT, MPL, the chemokine receptor CXCR4, as well as the receptors for IL3, IL5 and CSF2. Plays an important role in integrin signaling. Regulates cell proliferation, survival, differentiation, migration, adhesion, degranulation, and cytokine release. Involved in the regulation of endothelial activation, neutrophil adhesion and transendothelial migration. Down-regulates signaling pathways by phosphorylation of immunoreceptor tyrosine-based inhibitory motifs (ITIM), that then serve as binding sites for phosphatases, such as PTPN6/SHP-1, PTPN11/SHP-2 and INPP5D/SHIP-1, that modulate signaling by dephosphorylation of kinases and their substrates. Phosphorylates LIME1 in response to CD22 activation. Phosphorylates BTK, CBL, CD5, CD19, CD72, CD79A, CD79B, CSF2RB, DOK1, HCLS1, MS4A2/FCER1B, SYK and TEC. Phosphorylates PIRB at Tyr-794 and Tyr-824, which is required for PIRB interaction with PTPN6/SHP-1 and PTPN11/SHP-2. Promotes phosphorylation of SIRPA, PTPN6/SHP-1, PTPN11/SHP-2 and INPP5D/SHIP-1. Required for rapid phosphorylation of FER in response to FCER1 activation. Mediates KIT phosphorylation. Acts as an effector of EPOR (erythropoietin receptor) in controlling KIT expression and may play a role in erythroid differentiation during the switch between proliferation and maturation. Depending on the context, activates or inhibits several signaling cascades. Regulates phosphatidylinositol 3-kinase activity and AKT1 activation. Regulates activation of the MAP kinase signaling cascade, including activation of MAP2K1/MEK1, MAPK1/ERK2, MAPK3/ERK1, MAPK8/JNK1 and MAPK9/JNK2. Mediates activation of STAT5A and/or STAT5B. Phosphorylates LPXN on 'Tyr-72'. Kinase activity facilitates TLR4-TLR6 heterodimerization and signal initiation. Phosphorylates SCIMP on 'Tyr-96'; this enhances binding of SCIMP to TLR4, promoting the phosphorylation of TLR4, and a selective cytokine response to lipopolysaccharide in macrophages. Phosphorylates CLNK. Phosphorylates BCAR1/CAS and NEDD9/HEF1. The protein is Tyrosine-protein kinase Lyn (Lyn) of Mus musculus (Mouse).